Consider the following 626-residue polypeptide: DNA mismatch repair protein MutL (626 aa).

The disordered stretch occupies residues 377–413 (EEPQAVKQPTQLWQPSTKPIIEEPIQEEKSWDSNEEG). The span at 383–393 (KQPTQLWQPST) shows a compositional bias: polar residues.

This sequence belongs to the DNA mismatch repair MutL/HexB family.

This protein is involved in the repair of mismatches in DNA. It is required for dam-dependent methyl-directed DNA mismatch repair. May act as a 'molecular matchmaker', a protein that promotes the formation of a stable complex between two or more DNA-binding proteins in an ATP-dependent manner without itself being part of a final effector complex. The chain is DNA mismatch repair protein MutL from Bacillus anthracis (strain A0248).